We begin with the raw amino-acid sequence, 162 residues long: UPF0114 protein Psyr_4257 (162 aa).

The next 4 helical transmembrane spans lie at Leu15 to Phe35, Leu53 to Val73, Val109 to Thr129, and Leu136 to Leu156.

The protein belongs to the UPF0114 family.

Its subcellular location is the cell membrane. This Pseudomonas syringae pv. syringae (strain B728a) protein is UPF0114 protein Psyr_4257.